Reading from the N-terminus, the 453-residue chain is tRNA hydroxylation protein P (453 aa).

Belongs to the peptidase U32 family.

Involved in prephenate-dependent formation of 5-hydroxyuridine (ho5U) modification at position 34 in tRNAs, the first step in 5-carboxymethoxyuridine (cmo5U) biosynthesis. Involved differently in ho5U formation in each tRNA; tRNA(Leu3) and tRNA(Pro3) are major targets of TrhP. This Escherichia coli (strain K12) protein is tRNA hydroxylation protein P.